The primary structure comprises 185 residues: Ribosome-recycling factor (185 aa).

It belongs to the RRF family.

It is found in the cytoplasm. Functionally, responsible for the release of ribosomes from messenger RNA at the termination of protein biosynthesis. May increase the efficiency of translation by recycling ribosomes from one round of translation to another. This chain is Ribosome-recycling factor, found in Hydrogenovibrio crunogenus (strain DSM 25203 / XCL-2) (Thiomicrospira crunogena).